The chain runs to 228 residues: UPF0134 protein MPN_137 (228 aa).

The protein belongs to the UPF0134 family.

In Mycoplasma pneumoniae (strain ATCC 29342 / M129 / Subtype 1) (Mycoplasmoides pneumoniae), this protein is UPF0134 protein MPN_137.